The chain runs to 167 residues: MGIEQKAGDMGIVTASLEQVVNWSRSNAMWPLLFGLACCAIEMMGAQGANYDLSRFGMEINRASPRQADLMIVAGRVSRKMAPVVRRLYDQMADPKWVIAMGDCAACGGVFNNYAIVQGVDEIVPVDVYVAGCPPRPEALIDGIIHLHEKVRRMRLDGTLREPVHLS.

The [4Fe-4S] cluster site is built by C38, C39, C104, and C133.

The protein belongs to the complex I 20 kDa subunit family. As to quaternary structure, NDH-1 is composed of 14 different subunits. Subunits NuoB, C, D, E, F, and G constitute the peripheral sector of the complex. The cofactor is [4Fe-4S] cluster.

The protein localises to the cell membrane. It catalyses the reaction a quinone + NADH + 5 H(+)(in) = a quinol + NAD(+) + 4 H(+)(out). In terms of biological role, NDH-1 shuttles electrons from NADH, via FMN and iron-sulfur (Fe-S) centers, to quinones in the respiratory chain. The immediate electron acceptor for the enzyme in this species is believed to be ubiquinone. Couples the redox reaction to proton translocation (for every two electrons transferred, four hydrogen ions are translocated across the cytoplasmic membrane), and thus conserves the redox energy in a proton gradient. The protein is NADH-quinone oxidoreductase subunit B 1 of Roseiflexus castenholzii (strain DSM 13941 / HLO8).